A 977-amino-acid chain; its full sequence is Kinesin-like protein KIN-14D (977 aa).

Residues M1–S13 are compositionally biased toward low complexity. Residues M1–R20 are disordered. In terms of domain architecture, Calponin-homology (CH) spans S17–G118. Residues K297–L384 are a coiled coil. Residues N472 to V800 form the Kinesin motor domain. G556 to T563 contributes to the ATP binding site. Residues K812–S847 adopt a coiled-coil conformation. The interval P852–P977 is disordered. 2 stretches are compositionally biased toward polar residues: residues K861–G879 and R956–P977.

The protein belongs to the TRAFAC class myosin-kinesin ATPase superfamily. Kinesin family. KIN-14 subfamily.

The polypeptide is Kinesin-like protein KIN-14D (Oryza sativa subsp. japonica (Rice)).